The sequence spans 596 residues: UvrABC system protein C (596 aa).

The region spanning 14–91 (QQPGCYLMKD…IKKYDPRYNV (78 aa)) is the GIY-YIG domain. The 36-residue stretch at 196–231 (KDIRKNLAGEMQKASEALNFERAKEIRDTIQHIDAT) folds into the UVR domain.

The protein belongs to the UvrC family. As to quaternary structure, interacts with UvrB in an incision complex.

Its subcellular location is the cytoplasm. Its function is as follows. The UvrABC repair system catalyzes the recognition and processing of DNA lesions. UvrC both incises the 5' and 3' sides of the lesion. The N-terminal half is responsible for the 3' incision and the C-terminal half is responsible for the 5' incision. In Oceanobacillus iheyensis (strain DSM 14371 / CIP 107618 / JCM 11309 / KCTC 3954 / HTE831), this protein is UvrABC system protein C.